Reading from the N-terminus, the 830-residue chain is Lon protease (830 aa).

The Lon N-terminal domain maps to 20-215 (LPAVAIRDVV…LLIKILANEV (196 aa)). 367 to 374 (GPPGVGKT) is an ATP binding site. A Lon proteolytic domain is found at 602 to 781 (ENGVGISTGL…DEIVKIAFEK (180 aa)). Catalysis depends on residues Ser-687 and Lys-730. Residues 784–830 (PKSSFKKSKTAPKKESAKKAAKSKKPAVKKPAVKKTKQVKKTAKKKK) are disordered. A compositionally biased stretch (basic residues) spans 802-830 (KAAKSKKPAVKKPAVKKTKQVKKTAKKKK).

The protein belongs to the peptidase S16 family. In terms of assembly, homohexamer. Organized in a ring with a central cavity.

Its subcellular location is the cytoplasm. The catalysed reaction is Hydrolysis of proteins in presence of ATP.. ATP-dependent serine protease that mediates the selective degradation of mutant and abnormal proteins as well as certain short-lived regulatory proteins. Required for cellular homeostasis and for survival from DNA damage and developmental changes induced by stress. Degrades polypeptides processively to yield small peptide fragments that are 5 to 10 amino acids long. Binds to DNA in a double-stranded, site-specific manner. The protein is Lon protease of Elusimicrobium minutum (strain Pei191).